Consider the following 255-residue polypeptide: F-box/SPRY domain-containing protein 1 (255 aa).

In terms of domain architecture, F-box spans Asp-3 to His-51. Residues Met-61–Leu-253 form the B30.2/SPRY domain.

The protein belongs to the FBXO45/Fsn family. Component of an E3 ubiquitin ligase complex composed of hiw and Fsn.

The protein resides in the synapse. The protein operates within protein modification; protein ubiquitination. Its function is as follows. Required in the presynaptic motoneuron to down-regulate the levels of wnd and restrain synaptic terminal growth at the neuromuscular junction (NMJ). In Drosophila willistoni (Fruit fly), this protein is F-box/SPRY domain-containing protein 1.